A 591-amino-acid chain; its full sequence is Paxillin (591 aa).

M1 is modified (N-acetylmethionine). Positions 3 to 15 (DLDALLADLESTT) match the LD motif 1 motif. The disordered stretch occupies residues 17-138 (HISKRPVFLS…SSPTVMSTSL (122 aa)). Y31 carries the post-translational modification Phosphotyrosine; by PTK6. The segment covering 45 to 54 (VPPPVPPPPS) has biased composition (pro residues). Polar residues predominate over residues 69 to 101 (WQPSGSRFIHQQPQSSSPVYGSSAKTSSVSNPQ). Phosphoserine occurs at positions 83 and 85. Residue Y88 is modified to Phosphotyrosine. The residue at position 106 (S106) is a Phosphoserine. Phosphotyrosine; by PTK6 is present on Y118. Residues S119, S126, and S130 each carry the phosphoserine modification. Positions 121-137 (PNKQKSAESSPTVMSTS) are enriched in polar residues. The residue at position 132 (T132) is a Phosphothreonine. Residues S137, S140, and S143 each carry the phosphoserine modification. The short motif at 144–156 (ELDRLLLELNAVQ) is the LD motif 2 element. A disordered region spans residues 156–213 (QHNPPGFPADEANSGPPLPGALSPHYGVPETNSPLGGKAGPLTKEKPKRNGGRGLEDV). Y181 is subject to Phosphotyrosine. Positions 216 to 228 (SVESLLDELESSV) match the LD motif 3 motif. The residue at position 230 (S230) is a Phosphoserine. A disordered region spans residues 237–260 (VNQGEMSSPQRVTSTQQQTRISAS). A Phosphoserine; by CDK5 modification is found at S244. S250, S258, S261, and S272 each carry phosphoserine. Residues 265-276 (ELDELMASLSDF) carry the LD motif 4 motif. Positions 289–300 (RCWAADWPRDGG) are enriched in basic and acidic residues. Residues 289–335 (RCWAADWPRDGGRSSPGGQDEGGFMAQGKTGSSSPPGGPPKPGSQLD) form a disordered region. 4 positions are modified to phosphoserine: S303, S322, S332, and S340. Residues 333-345 (QLDSMLGSLQSDL) carry the LD motif 5 motif. LIM zinc-binding domains lie at 356 to 415 (GVCG…LFSP), 416 to 473 (RCYY…DMFA), 474 to 533 (PKCG…RRGS), and 534 to 591 (LCSG…KLFC). Residue S533 is modified to Phosphoserine.

This sequence belongs to the paxillin family. As to quaternary structure, binds to vinculin and to the SH3 domain of SRC. Interacts with GIT1, NUDT16L1/SDOS, PARVA, PARVB, SORBS1 and TGFB1I1. Component of cytoplasmic complexes, which also contain GIT1, ARHGEF6 and PAK1. Binds ASAP2. Interacts with RNF5 and PDCD10. Interacts with NEK3 and this interaction is prolactin-dependent. Interacts with PTK2/FAK1 and PTK2B/PYK2. Interacts with PTK6. Interacts with CD36. Interacts (via cytoplasmic domain) with CEACAM1; the interaction is phosphotyrosyl-dependent. Interacts with PXN; this complex stabilizes actin dynamics. Interacts with TRIM15. Interacts with PAK4; PAK4 acts as a scaffold to suppport PAXI phosphorylation at Ser-272. In terms of processing, phosphorylated by MAPK1/ERK2. Phosphorylated on tyrosine residues during integrin-mediated cell adhesion, embryonic development, fibroblast transformation and following stimulation of cells by mitogens. Phosphorylation at Ser-244 by CDK5 reduces its interaction with PTK2/FAK1 in matrix-cell focal adhesions (MCFA) during oligodendrocytes (OLs) differentiation. Phosphorylation at Tyr-31 and Tyr-118 by PTK6 promote the activation of RAC1 via CRK/CrKII, thereby promoting migration and invasion. Phosphorylation at Ser-250 by SLK is required for PXN redistribution and cell motility. Phosphorylation at Ser-272 promotes focal adhesion disassembly during cell migration.

It is found in the cytoplasm. It localises to the cytoskeleton. The protein resides in the cell junction. Its subcellular location is the focal adhesion. The protein localises to the cell cortex. Functionally, cytoskeletal protein involved in actin-membrane attachment at sites of cell adhesion to the extracellular matrix (focal adhesion). Recruits other proteins such as TRIM15 to focal adhesion. This Pongo abelii (Sumatran orangutan) protein is Paxillin (PXN).